Consider the following 87-residue polypeptide: Small ribosomal subunit protein uS15 (87 aa).

This sequence belongs to the universal ribosomal protein uS15 family. Part of the 30S ribosomal subunit. Forms a bridge to the 50S subunit in the 70S ribosome, contacting the 23S rRNA.

One of the primary rRNA binding proteins, it binds directly to 16S rRNA where it helps nucleate assembly of the platform of the 30S subunit by binding and bridging several RNA helices of the 16S rRNA. In terms of biological role, forms an intersubunit bridge (bridge B4) with the 23S rRNA of the 50S subunit in the ribosome. This is Small ribosomal subunit protein uS15 from Pseudothermotoga lettingae (strain ATCC BAA-301 / DSM 14385 / NBRC 107922 / TMO) (Thermotoga lettingae).